The primary structure comprises 231 residues: Phosphatidylserine decarboxylase proenzyme (231 aa).

S188 functions as the Schiff-base intermediate with substrate; via pyruvic acid in the catalytic mechanism. S188 carries the pyruvic acid (Ser); by autocatalysis modification.

Belongs to the phosphatidylserine decarboxylase family. PSD-A subfamily. Heterodimer of a large membrane-associated beta subunit and a small pyruvoyl-containing alpha subunit. Pyruvate serves as cofactor. Post-translationally, is synthesized initially as an inactive proenzyme. Formation of the active enzyme involves a self-maturation process in which the active site pyruvoyl group is generated from an internal serine residue via an autocatalytic post-translational modification. Two non-identical subunits are generated from the proenzyme in this reaction, and the pyruvate is formed at the N-terminus of the alpha chain, which is derived from the carboxyl end of the proenzyme. The post-translation cleavage follows an unusual pathway, termed non-hydrolytic serinolysis, in which the side chain hydroxyl group of the serine supplies its oxygen atom to form the C-terminus of the beta chain, while the remainder of the serine residue undergoes an oxidative deamination to produce ammonia and the pyruvoyl prosthetic group on the alpha chain.

The protein localises to the cell membrane. It catalyses the reaction a 1,2-diacyl-sn-glycero-3-phospho-L-serine + H(+) = a 1,2-diacyl-sn-glycero-3-phosphoethanolamine + CO2. The protein operates within phospholipid metabolism; phosphatidylethanolamine biosynthesis; phosphatidylethanolamine from CDP-diacylglycerol: step 2/2. In terms of biological role, catalyzes the formation of phosphatidylethanolamine (PtdEtn) from phosphatidylserine (PtdSer). In Rickettsia peacockii (strain Rustic), this protein is Phosphatidylserine decarboxylase proenzyme.